The primary structure comprises 81 residues: UPF0180 protein ABC2430 (81 aa).

It belongs to the UPF0180 family.

The chain is UPF0180 protein ABC2430 from Shouchella clausii (strain KSM-K16) (Alkalihalobacillus clausii).